The primary structure comprises 317 residues: Protoheme IX farnesyltransferase (317 aa).

9 consecutive transmembrane segments (helical) span residues 29 to 49, 53 to 73, 102 to 122, 123 to 143, 151 to 171, 179 to 199, 224 to 241, 245 to 267, and 283 to 303; these read LILL…QGRV, LLLI…TINC, VFLA…FANL, LSAC…THWL, IVIG…AVTG, VLFG…AMLI, IFLY…LVYP, VSWG…AWQL, and FSIL…LLLP.

Belongs to the UbiA prenyltransferase family. Protoheme IX farnesyltransferase subfamily.

It localises to the cell inner membrane. It carries out the reaction heme b + (2E,6E)-farnesyl diphosphate + H2O = Fe(II)-heme o + diphosphate. It participates in porphyrin-containing compound metabolism; heme O biosynthesis; heme O from protoheme: step 1/1. Converts heme B (protoheme IX) to heme O by substitution of the vinyl group on carbon 2 of heme B porphyrin ring with a hydroxyethyl farnesyl side group. This is Protoheme IX farnesyltransferase from Thermosynechococcus vestitus (strain NIES-2133 / IAM M-273 / BP-1).